We begin with the raw amino-acid sequence, 231 residues long: Ribonuclease HII (231 aa).

The region spanning 23 to 214 (GPVAGVDEAG…VAKAHREWAL (192 aa)) is the RNase H type-2 domain. Residues Asp-29, Glu-30, and Asp-123 each coordinate a divalent metal cation.

Belongs to the RNase HII family. Requires Mn(2+) as cofactor. The cofactor is Mg(2+).

It localises to the cytoplasm. It carries out the reaction Endonucleolytic cleavage to 5'-phosphomonoester.. Endonuclease that specifically degrades the RNA of RNA-DNA hybrids. This is Ribonuclease HII from Corynebacterium efficiens (strain DSM 44549 / YS-314 / AJ 12310 / JCM 11189 / NBRC 100395).